A 101-amino-acid chain; its full sequence is Small ribosomal subunit protein uS14 (101 aa).

The protein belongs to the universal ribosomal protein uS14 family. As to quaternary structure, part of the 30S ribosomal subunit. Contacts proteins S3 and S10.

In terms of biological role, binds 16S rRNA, required for the assembly of 30S particles and may also be responsible for determining the conformation of the 16S rRNA at the A site. The protein is Small ribosomal subunit protein uS14 of Cupriavidus metallidurans (strain ATCC 43123 / DSM 2839 / NBRC 102507 / CH34) (Ralstonia metallidurans).